Here is a 256-residue protein sequence, read N- to C-terminus: Small ribosomal subunit protein eS1A (256 aa).

Ala-2 is modified (N-acetylalanine; partial).

This sequence belongs to the eukaryotic ribosomal protein eS1 family. As to quaternary structure, component of the small ribosomal subunit. Mature ribosomes consist of a small (40S) and a large (60S) subunit. The 40S subunit contains about 33 different proteins and 1 molecule of RNA (18S). The 60S subunit contains about 49 different proteins and 3 molecules of RNA (25S, 5.8S and 5S).

Its subcellular location is the cytoplasm. The protein is Small ribosomal subunit protein eS1A of Clavispora lusitaniae (strain ATCC 42720) (Yeast).